A 116-amino-acid polypeptide reads, in one-letter code: HTH-type transcriptional regulator AnsR (116 aa).

Residues 6–60 (LTELRKKKNWSLQYTADLLGIAKSTYAGYESGYRRPSLEALAMLADLFDTTCDEL) enclose the HTH cro/C1-type domain. Positions 17-36 (LQYTADLLGIAKSTYAGYES) form a DNA-binding region, H-T-H motif.

Transcriptional repressor for the ans operon coding for L-asparaginase and L-aspartase. NH4(+) may influence this repression. The chain is HTH-type transcriptional regulator AnsR (ansR) from Bacillus subtilis (strain 168).